The sequence spans 257 residues: Receptor expression-enhancing protein 4 (257 aa).

A run of 2 helical transmembrane segments spans residues 1–21 and 42–62; these read MVSWMICRLVVLIFGMLYPAY and WIVFAIFMAAETFTDIFISWF. Ser152 and Ser194 each carry phosphoserine. Residues 159-257 are disordered; the sequence is IPDTSAPTYQ…KKTIPSDLDS (99 aa). Thr196 carries the phosphothreonine modification. The residue at position 202 (Ser202) is a Phosphoserine. Thr250 is modified (phosphothreonine). Position 253 is a phosphoserine (Ser253).

This sequence belongs to the DP1 family.

The protein resides in the endoplasmic reticulum membrane. In terms of biological role, microtubule-binding protein required to ensure proper cell division and nuclear envelope reassembly by sequestering the endoplasmic reticulum away from chromosomes during mitosis. Probably acts by clearing the endoplasmic reticulum membrane from metaphase chromosomes. In Rattus norvegicus (Rat), this protein is Receptor expression-enhancing protein 4 (Reep4).